The primary structure comprises 458 residues: Probable Xaa-Pro aminopeptidase pepP (458 aa).

Positions 254, 265, 388, and 428 each coordinate Mn(2+).

This sequence belongs to the peptidase M24B family. Mn(2+) serves as cofactor.

The enzyme catalyses Release of any N-terminal amino acid, including proline, that is linked to proline, even from a dipeptide or tripeptide.. Catalyzes the removal of a penultimate prolyl residue from the N-termini of peptides. This is Probable Xaa-Pro aminopeptidase pepP (pepP) from Botryotinia fuckeliana (strain B05.10) (Noble rot fungus).